Consider the following 572-residue polypeptide: Secreted triacylglycerol lipase LIP6 (572 aa).

A signal peptide spans Met1–Ala23. A disulfide bond links Cys117 and Cys291. Ser202 serves as the catalytic Nucleophile. Residue Asp351 is part of the active site. N-linked (GlcNAc...) asparagine glycosylation is present at Asn360. His385 is a catalytic residue. A disordered region spans residues Lys468–Met572. The segment covering Pro491–Pro511 has biased composition (basic and acidic residues). The segment covering Asp512–Asn525 has biased composition (low complexity). Asn525 carries an N-linked (GlcNAc...) asparagine glycan. Basic residues predominate over residues Ala528 to Gly540. Low complexity predominate over residues His541 to Gly562. A compositionally biased stretch (basic residues) spans Ser563–Met572.

This sequence belongs to the AB hydrolase superfamily. Lipase family. Class Lip subfamily.

The protein localises to the secreted. It is found in the cell wall. It catalyses the reaction a triacylglycerol + H2O = a diacylglycerol + a fatty acid + H(+). It carries out the reaction a monoacylglycerol + H2O = glycerol + a fatty acid + H(+). The catalysed reaction is a diacylglycerol + H2O = a monoacylglycerol + a fatty acid + H(+). Secreted lipase involved in Dandruff and seborrheic dermatitis (D/SD) probably via lipase-mediated breakdown of sebaceous lipids and release of irritating free fatty acids. Shows only minimal activity against triolein. Mostly converts monoolein to di- and triolein, while free fatty acids are only produced in low amounts. This is Secreted triacylglycerol lipase LIP6 from Malassezia globosa (strain ATCC MYA-4612 / CBS 7966) (Dandruff-associated fungus).